The following is a 229-amino-acid chain: tRNA pseudouridine synthase B (229 aa).

The Nucleophile role is filled by Asp-52.

The protein belongs to the pseudouridine synthase TruB family. Type 1 subfamily.

The enzyme catalyses uridine(55) in tRNA = pseudouridine(55) in tRNA. In terms of biological role, responsible for synthesis of pseudouridine from uracil-55 in the psi GC loop of transfer RNAs. This Flavobacterium johnsoniae (strain ATCC 17061 / DSM 2064 / JCM 8514 / BCRC 14874 / CCUG 350202 / NBRC 14942 / NCIMB 11054 / UW101) (Cytophaga johnsonae) protein is tRNA pseudouridine synthase B.